We begin with the raw amino-acid sequence, 126 residues long: Holo-[acyl-carrier-protein] synthase (126 aa).

Residues aspartate 8 and glutamate 57 each contribute to the Mg(2+) site.

It belongs to the P-Pant transferase superfamily. AcpS family. Requires Mg(2+) as cofactor.

Its subcellular location is the cytoplasm. It carries out the reaction apo-[ACP] + CoA = holo-[ACP] + adenosine 3',5'-bisphosphate + H(+). Functionally, transfers the 4'-phosphopantetheine moiety from coenzyme A to a Ser of acyl-carrier-protein. The sequence is that of Holo-[acyl-carrier-protein] synthase from Geobacter sulfurreducens (strain ATCC 51573 / DSM 12127 / PCA).